The sequence spans 102 residues: Small ribosomal subunit protein uS10 (102 aa).

This sequence belongs to the universal ribosomal protein uS10 family. In terms of assembly, part of the 30S ribosomal subunit.

Involved in the binding of tRNA to the ribosomes. This is Small ribosomal subunit protein uS10 from Exiguobacterium sp. (strain ATCC BAA-1283 / AT1b).